A 204-amino-acid chain; its full sequence is Terpene cyclase trt1 (204 aa).

The next 5 membrane-spanning stretches (helical) occupy residues 44–64 (FMSI…YPIA), 67–87 (HWAG…FIVA), 103–122 (FARL…HLAL), 132–154 (FFWS…LVCR), and 169–189 (WFYI…FFYF).

Belongs to the paxB family.

It is found in the membrane. It participates in secondary metabolite biosynthesis; terpenoid biosynthesis. Terpene cyclase; part of the gene cluster that mediates the biosynthesis of terretonin, a fungal meroterpenoid that acts as a mycotoxin. The first step of the pathway is the synthesis of 3,5-dimethylorsellinic acid (DMOA) by the polyketide synthase trt4. DMOA is then prenylated into farnesyl-DMOA by the polyprenyl transferase trt2. Methylation by the methyltransferase trt5 then leads to farnesyl-DMOA methyl ester which is further subject to epoxidation by the FAD-dependent monooxygenase trt8 to yield epoxyfarnesyl-DMOA methyl ester. Cyclization of epoxyfarnesyl-DMOA methyl ester by the terpene cyclase trt1 leads to a tetracycle intermediate which is in turn converted to preterretonin. Dehydrogenase trt9 comes next to transform preterretonin to preterrenoid. The FAD-dependent monooxygenase trt3 is then required for the C-hydroxylation at C16 of preterrenoid to yield terrenoid. The cytochrome P450 trt6 catalyzes three successive oxidations to transform terrenoid into an unstable intermediate, which then undergoes the D-ring expansion and unusual rearrangement of the methoxy group to afford the core skeleton of terretonin. Trt14 catalyzes the D-ring expansion of terretonin involving intramolecular methoxy rearrangement as well as the hydrolysis of the expanded D-ring and the methyl ester moiety. Finally, the nonheme iron-dependent dioxygenase trt7 accomplishes the last two oxidation reactions steps to complete the biosynthesis of terretonin. Terretonin C is produced via spontaneous decarboxylation of the terretonin precursor. Another shunt product of the terretonin biosynthesis is dihydrofarnesyl-DMOA, derived from epoxyfarnesyl-DMOA through hydrolysis of the epoxide. This Aspergillus terreus (strain NIH 2624 / FGSC A1156) protein is Terpene cyclase trt1.